A 134-amino-acid chain; its full sequence is Large ribosomal subunit protein bL20 (134 aa).

Belongs to the bacterial ribosomal protein bL20 family.

Its function is as follows. Binds directly to 23S ribosomal RNA and is necessary for the in vitro assembly process of the 50S ribosomal subunit. It is not involved in the protein synthesizing functions of that subunit. The sequence is that of Large ribosomal subunit protein bL20 from Brucella anthropi (strain ATCC 49188 / DSM 6882 / CCUG 24695 / JCM 21032 / LMG 3331 / NBRC 15819 / NCTC 12168 / Alc 37) (Ochrobactrum anthropi).